A 447-amino-acid chain; its full sequence is Na(+)-translocating NADH-quinone reductase subunit A (447 aa).

It belongs to the NqrA family. Composed of six subunits; NqrA, NqrB, NqrC, NqrD, NqrE and NqrF.

It catalyses the reaction a ubiquinone + n Na(+)(in) + NADH + H(+) = a ubiquinol + n Na(+)(out) + NAD(+). Functionally, NQR complex catalyzes the reduction of ubiquinone-1 to ubiquinol by two successive reactions, coupled with the transport of Na(+) ions from the cytoplasm to the periplasm. NqrA to NqrE are probably involved in the second step, the conversion of ubisemiquinone to ubiquinol. The sequence is that of Na(+)-translocating NADH-quinone reductase subunit A from Haemophilus influenzae (strain 86-028NP).